Here is a 234-residue protein sequence, read N- to C-terminus: Phosphoglycolate phosphatase (234 aa).

The active-site Nucleophile is Asp8. The Mg(2+) site is built by Asp8 and Asp10. Substrate is bound at residue Lys155. Mg(2+) contacts are provided by Asp178 and Asp182.

Belongs to the archaeal SPP-like hydrolase family. Mg(2+) serves as cofactor.

It carries out the reaction 2-phosphoglycolate + H2O = glycolate + phosphate. Catalyzes the dephosphorylation of 2-phosphoglycolate. The sequence is that of Phosphoglycolate phosphatase from Thermococcus sibiricus (strain DSM 12597 / MM 739).